We begin with the raw amino-acid sequence, 85 residues long: Small ribosomal subunit protein uS17 (85 aa).

Belongs to the universal ribosomal protein uS17 family. As to quaternary structure, part of the 30S ribosomal subunit.

In terms of biological role, one of the primary rRNA binding proteins, it binds specifically to the 5'-end of 16S ribosomal RNA. The polypeptide is Small ribosomal subunit protein uS17 (Haemophilus influenzae (strain 86-028NP)).